A 352-amino-acid chain; its full sequence is 4-hydroxy-3-methylbut-2-en-1-yl diphosphate synthase (flavodoxin) (352 aa).

Residues Cys262, Cys265, Cys297, and Glu304 each coordinate [4Fe-4S] cluster.

The protein belongs to the IspG family. The cofactor is [4Fe-4S] cluster.

The catalysed reaction is (2E)-4-hydroxy-3-methylbut-2-enyl diphosphate + oxidized [flavodoxin] + H2O + 2 H(+) = 2-C-methyl-D-erythritol 2,4-cyclic diphosphate + reduced [flavodoxin]. Its pathway is isoprenoid biosynthesis; isopentenyl diphosphate biosynthesis via DXP pathway; isopentenyl diphosphate from 1-deoxy-D-xylulose 5-phosphate: step 5/6. Its function is as follows. Converts 2C-methyl-D-erythritol 2,4-cyclodiphosphate (ME-2,4cPP) into 1-hydroxy-2-methyl-2-(E)-butenyl 4-diphosphate. The polypeptide is 4-hydroxy-3-methylbut-2-en-1-yl diphosphate synthase (flavodoxin) (Campylobacter curvus (strain 525.92)).